The following is a 156-amino-acid chain: Small ribosomal subunit protein uS7 (156 aa).

Belongs to the universal ribosomal protein uS7 family. In terms of assembly, part of the 30S ribosomal subunit. Contacts proteins S9 and S11.

In terms of biological role, one of the primary rRNA binding proteins, it binds directly to 16S rRNA where it nucleates assembly of the head domain of the 30S subunit. Is located at the subunit interface close to the decoding center, probably blocks exit of the E-site tRNA. The polypeptide is Small ribosomal subunit protein uS7 (Glaesserella parasuis serovar 5 (strain SH0165) (Haemophilus parasuis)).